A 738-amino-acid chain; its full sequence is Eukaryotic translation initiation factor 3 subunit B (738 aa).

A sufficient for interaction with HCR1 and TIF32 region spans residues 1-120 (MCGCVGVISN…LFIQFKTAQM (120 aa)). The segment at 1–245 (MCGCVGVISN…GIQSWGGAQF (245 aa)) is sufficient for interaction with PIC8. One can recognise an RRM domain in the interval 59 to 146 (NFVVVDGAPI…HRLLVNKLSD (88 aa)). WD repeat units follow at residues 211–250 (PRKG…SISK), 322–360 (QKEM…LLDK), 363–406 (VKID…QTAR), and 537–579 (VVDK…ENVR).

This sequence belongs to the eIF-3 subunit B family. In terms of assembly, component of the eukaryotic translation initiation factor 3 (eIF-3) complex.

It is found in the cytoplasm. Functionally, RNA-binding component of the eukaryotic translation initiation factor 3 (eIF-3) complex, which is involved in protein synthesis of a specialized repertoire of mRNAs and, together with other initiation factors, stimulates binding of mRNA and methionyl-tRNAi to the 40S ribosome. The eIF-3 complex specifically targets and initiates translation of a subset of mRNAs involved in cell proliferation. This Meyerozyma guilliermondii (strain ATCC 6260 / CBS 566 / DSM 6381 / JCM 1539 / NBRC 10279 / NRRL Y-324) (Yeast) protein is Eukaryotic translation initiation factor 3 subunit B.